The sequence spans 326 residues: DNA-directed RNA polymerase subunit alpha (326 aa).

The alpha N-terminal domain (alpha-NTD) stretch occupies residues 1 to 231 (MQTALLKPKI…DQLSVFAALE (231 aa)). Positions 247-326 (IDPILLRPVD…ENWPPAGLDK (80 aa)) are alpha C-terminal domain (alpha-CTD).

This sequence belongs to the RNA polymerase alpha chain family. Homodimer. The RNAP catalytic core consists of 2 alpha, 1 beta, 1 beta' and 1 omega subunit. When a sigma factor is associated with the core the holoenzyme is formed, which can initiate transcription.

It catalyses the reaction RNA(n) + a ribonucleoside 5'-triphosphate = RNA(n+1) + diphosphate. Its function is as follows. DNA-dependent RNA polymerase catalyzes the transcription of DNA into RNA using the four ribonucleoside triphosphates as substrates. The sequence is that of DNA-directed RNA polymerase subunit alpha from Cupriavidus pinatubonensis (strain JMP 134 / LMG 1197) (Cupriavidus necator (strain JMP 134)).